We begin with the raw amino-acid sequence, 920 residues long: Nonribosomal peptide synthetase atrA (920 aa).

The segment at 13 to 428 (AAAQERCGRV…AGRLKETMII (416 aa)) is adenylation (A) domain. Residues 558-637 (PPKDELERSL…ELSAALHDLQ (80 aa)) enclose the Carrier domain. Serine 595 carries the post-translational modification O-(pantetheine 4'-phosphoryl)serine. Residues 656 to 905 (PLWLIHPGVG…YTMLAPEHVF (250 aa)) form a thioesterase (TE) domain region.

The protein belongs to the NRP synthetase family.

It catalyses the reaction 2 3-(4-hydroxyphenyl)pyruvate + 2 ATP = atromentin + 2 AMP + 2 diphosphate + H(+). Its function is as follows. Nonribosomal peptide synthetase that mediates the biosynthesis of atromentin. AtrA first activates 4-hydroxyphenylpyruvate (HPPA) through its A domain to AMP-HPPA. The HPPA unit is then loaded to the T domain and eventually transferred to the TE domain. Another HPPA unit is then loaded onto the T domain. The TE domain then catalyzes the condensation of the two HPPA units and the release of atromentin via cyclization. The sequence is that of Nonribosomal peptide synthetase atrA from Aspergillus terreus (strain NIH 2624 / FGSC A1156).